Reading from the N-terminus, the 317-residue chain is Nicotianamine synthase (317 aa).

It belongs to the nicotianamine synthase (NAS)-like family. In terms of assembly, homomultimer. In terms of tissue distribution, leaves and roots.

The enzyme catalyses 3 S-adenosyl-L-methionine = nicotianamine + 3 S-methyl-5'-thioadenosine + 3 H(+). In terms of biological role, synthesizes nicotianamine, a polyamine that serves as a sensor for the physiological iron status within the plant, and/or might be involved in the transport of iron. The sequence is that of Nicotianamine synthase (CHLN) from Solanum lycopersicum (Tomato).